Here is a 551-residue protein sequence, read N- to C-terminus: Formate--tetrahydrofolate ligase (551 aa).

65-72 (TPAGEGKT) contacts ATP.

It belongs to the formate--tetrahydrofolate ligase family.

The enzyme catalyses (6S)-5,6,7,8-tetrahydrofolate + formate + ATP = (6R)-10-formyltetrahydrofolate + ADP + phosphate. The protein operates within one-carbon metabolism; tetrahydrofolate interconversion. This chain is Formate--tetrahydrofolate ligase, found in Thermosipho africanus (strain TCF52B).